A 104-amino-acid chain; its full sequence is DET1- and DDB1-associated protein 1 (104 aa).

Residues 67–77 show a composition bias toward basic and acidic residues; it reads KKNAAKKREQE. Residues 67–104 form a disordered region; sequence KKNAAKKREQEQAEGEGGSPAPPRKIARTDSQEMNEDS.

Belongs to the DDA1 family. Component of numerous DCX (DDB1-CUL4-X-box) E3 ubiquitin-protein ligase complexes which consist of a core of DDB1, cullin-4 (CUL4A or CUL4B), DDA1 and RBX1.

It functions in the pathway protein modification; protein ubiquitination. Functions as a component of numerous distinct DCX (DDB1-CUL4-X-box) E3 ubiquitin-protein ligase complexes which mediate the ubiquitination and subsequent proteasomal degradation of target proteins. In the DCX complexes, acts as a scaffolding subunit required to stabilize the complex. This Danio rerio (Zebrafish) protein is DET1- and DDB1-associated protein 1.